The chain runs to 40 residues: Photosystem II reaction center protein J (40 aa).

The chain crosses the membrane as a helical span at residues Ile8–Phe28.

It belongs to the PsbJ family. In terms of assembly, PSII is composed of 1 copy each of membrane proteins PsbA, PsbB, PsbC, PsbD, PsbE, PsbF, PsbH, PsbI, PsbJ, PsbK, PsbL, PsbM, PsbT, PsbX, PsbY, PsbZ, Psb30/Ycf12, at least 3 peripheral proteins of the oxygen-evolving complex and a large number of cofactors. It forms dimeric complexes.

The protein resides in the plastid. It localises to the chloroplast thylakoid membrane. In terms of biological role, one of the components of the core complex of photosystem II (PSII). PSII is a light-driven water:plastoquinone oxidoreductase that uses light energy to abstract electrons from H(2)O, generating O(2) and a proton gradient subsequently used for ATP formation. It consists of a core antenna complex that captures photons, and an electron transfer chain that converts photonic excitation into a charge separation. In Huperzia lucidula (Shining clubmoss), this protein is Photosystem II reaction center protein J.